A 376-amino-acid polypeptide reads, in one-letter code: Formate dehydrogenase 2 (376 aa).

Val-97 and Asn-121 together coordinate substrate. Residues 176-177, Asp-197, 244-248, Thr-270, Asp-296, and 325-328 each bind NAD(+); these read RI, PLHKD, and HISG.

The protein belongs to the D-isomer specific 2-hydroxyacid dehydrogenase family. FDH subfamily. As to quaternary structure, homodimer.

It localises to the cytoplasm. It catalyses the reaction formate + NAD(+) = CO2 + NADH. Its function is as follows. Catalyzes the NAD(+)-dependent oxidation of formate to carbon dioxide. Formate oxidation is the final step in the methanol oxidation pathway in methylotrophic microorganisms. Has a role in the detoxification of exogenous formate in non-methylotrophic organisms. The sequence is that of Formate dehydrogenase 2 (FDH2) from Saccharomyces cerevisiae (strain CEN.PK113-7D) (Baker's yeast).